A 661-amino-acid chain; its full sequence is MNNFSIISEYKPAGDQPKAIDEIIAGLSSKKRSQMLLGITGSGKTFTMANIIERTNRPTLIMAHNKTLAAQIYSEMKSLFPKNAVEYFVSYYDYYQPEAYIARTDTFIEKDSSINEQIDLMRHAATRSLLERRDVIVVSSVSCIYGLGSPDLYYQMMVNLEPGQSYPRDQLLNDLINLQYERNDIGFERGCFRVKGDNIDIFPSHYSDKAWRLSFFGNELEYIHEFDPLTGEKLAKLDKAMVFGNSHFVMPQETVNNAISGIEEELQKRLEFLKSQDKPLETQRLNQRTQYDLEMLTETGSCKGVENYSRFFTGRNAGEPPPTLFEYLPEDALLFVDESHVSVPQIRAMYNGDRARKKVLVEHGFRLPSALDNRPLKFEEWDKFRPQTVFVSATPGPFELEETGGTVVELIIRPTGLLDPECIIKPATNQVEDLISEIQTTIAQGFRVLVTTLTKKMAEDLTAYLQELKYKTSYLHSNVHTLERIEILRDLRQGTIDVLVGINLLREGLDIPECGLVAILDADKEGFLRSEVSLIQTIGRAARNSAGRVILYADKMTKSIDKAVSETLRRRQIQQEYNEKHGIIPKTINRAIHALAEFEKIDSKLDKKQAHTLFDNPAKLKTHIDKLKKEMLKAASNLEFEQAVKLRDQLKTLEEAALELS.

In terms of domain architecture, Helicase ATP-binding spans 25 to 414 (AGLSSKKRSQ…GTVVELIIRP (390 aa)). 38–45 (GITGSGKT) is an ATP binding site. Positions 91 to 114 (YYDYYQPEAYIARTDTFIEKDSSI) match the Beta-hairpin motif. One can recognise a Helicase C-terminal domain in the interval 430 to 592 (QVEDLISEIQ…IIPKTINRAI (163 aa)). The 36-residue stretch at 621 to 656 (KTHIDKLKKEMLKAASNLEFEQAVKLRDQLKTLEEA) folds into the UVR domain.

The protein belongs to the UvrB family. In terms of assembly, forms a heterotetramer with UvrA during the search for lesions. Interacts with UvrC in an incision complex.

It is found in the cytoplasm. Its function is as follows. The UvrABC repair system catalyzes the recognition and processing of DNA lesions. A damage recognition complex composed of 2 UvrA and 2 UvrB subunits scans DNA for abnormalities. Upon binding of the UvrA(2)B(2) complex to a putative damaged site, the DNA wraps around one UvrB monomer. DNA wrap is dependent on ATP binding by UvrB and probably causes local melting of the DNA helix, facilitating insertion of UvrB beta-hairpin between the DNA strands. Then UvrB probes one DNA strand for the presence of a lesion. If a lesion is found the UvrA subunits dissociate and the UvrB-DNA preincision complex is formed. This complex is subsequently bound by UvrC and the second UvrB is released. If no lesion is found, the DNA wraps around the other UvrB subunit that will check the other stand for damage. This is UvrABC system protein B from Rickettsia conorii (strain ATCC VR-613 / Malish 7).